Consider the following 467-residue polypeptide: Colanic acid biosynthesis protein WcaM (467 aa).

It functions in the pathway slime biogenesis; slime polysaccharide biosynthesis. This is Colanic acid biosynthesis protein WcaM (wcaM) from Salmonella typhimurium (strain LT2 / SGSC1412 / ATCC 700720).